The primary structure comprises 263 residues: Hydroxyacylglutathione hydrolase (263 aa).

Zn(2+) is bound by residues histidine 60, histidine 62, aspartate 64, histidine 65, histidine 120, aspartate 137, and histidine 175.

The protein belongs to the metallo-beta-lactamase superfamily. Glyoxalase II family. As to quaternary structure, monomer. Requires Zn(2+) as cofactor.

It catalyses the reaction an S-(2-hydroxyacyl)glutathione + H2O = a 2-hydroxy carboxylate + glutathione + H(+). It participates in secondary metabolite metabolism; methylglyoxal degradation; (R)-lactate from methylglyoxal: step 2/2. Its function is as follows. Thiolesterase that catalyzes the hydrolysis of S-D-lactoyl-glutathione to form glutathione and D-lactic acid. This chain is Hydroxyacylglutathione hydrolase, found in Shewanella pealeana (strain ATCC 700345 / ANG-SQ1).